A 151-amino-acid chain; its full sequence is Deoxyuridine 5'-triphosphate nucleotidohydrolase (151 aa).

Substrate is bound by residues 70–72, N83, 87–89, and M97; these read RSG and LID.

The protein belongs to the dUTPase family. The cofactor is Mg(2+).

The enzyme catalyses dUTP + H2O = dUMP + diphosphate + H(+). The protein operates within pyrimidine metabolism; dUMP biosynthesis; dUMP from dCTP (dUTP route): step 2/2. This enzyme is involved in nucleotide metabolism: it produces dUMP, the immediate precursor of thymidine nucleotides and it decreases the intracellular concentration of dUTP so that uracil cannot be incorporated into DNA. This is Deoxyuridine 5'-triphosphate nucleotidohydrolase from Psychromonas ingrahamii (strain DSM 17664 / CCUG 51855 / 37).